A 271-amino-acid chain; its full sequence is Short-chain dehydrogenase PC-15 (271 aa).

NADP(+) is bound by residues Ile8, Thr34, Lys40, Asp56, Asn84, Tyr148, Lys152, Val181, and Thr183. The active-site Proton acceptor is Tyr148. The Lowers pKa of active site Tyr role is filled by Lys152.

Belongs to the short-chain dehydrogenases/reductases (SDR) family.

It functions in the pathway secondary metabolite biosynthesis. Its function is as follows. Short-chain dehydrogenase; part of the gene cluster that mediates the biosynthesis of the indole diterpenes penitrems. The geranylgeranyl diphosphate (GGPP) synthase penG catalyzes the first step in penitrem biosynthesis via conversion of farnesyl pyrophosphate and isopentyl pyrophosphate into geranylgeranyl pyrophosphate (GGPP). Condensation of indole-3-glycerol phosphate with GGPP by the prenyl transferase penC then forms 3-geranylgeranylindole (3-GGI). Epoxidation by the FAD-dependent monooxygenase penM leads to a epoxidized-GGI that is substrate of the terpene cyclase penB for cyclization to yield paspaline. Paspaline is subsequently converted to 13-desoxypaxilline by the cytochrome P450 monooxygenase penP, the latter being then converted to paxilline by the cytochrome P450 monooxygenase penQ. Paxilline is converted to beta-paxitriol via C-10 ketoreduction by the short-chain dehydrogenase PC-15 which can be monoprenylated at the C-20 by the indole diterpene prenyltransferase penD. A two-step elimination (acetylation and elimination) process performed by the O-acetyltransferase PC-16 and the P.simplicissimum ptmI-ortholog not yet identified in P.crustosum, leads to the production of the prenylated form of penijanthine. The FAD-linked oxidoreductase ptmO then converts the prenylated form of penijanthine into PC-M5 which is in turn transformed into PC-M4 by the aromatic dimethylallyltransferase PC-22. A series of oxidation steps involving 4 cytochrome P450 monooxygenases (PC-21, PC-05, PC-23, PC-20) and a FAD-dependent monooxygenase (PC-14) are required for the transformation of PC-M4 to penitrems A and E. Synthesis of these final products is proposed to proceed via penitrems D and C (PC-21, PC-05, PC-14) and penitrems B and F (PC-21, PC-05, PC-14, PC-23). This is Short-chain dehydrogenase PC-15 from Penicillium crustosum (Blue mold fungus).